A 123-amino-acid polypeptide reads, in one-letter code: Small ribosomal subunit protein uS12 (123 aa).

Residues 1-21 (MPTIEQLVRKGRQAKPKKSKT) are disordered. Over residues 9–20 (RKGRQAKPKKSK) the composition is skewed to basic residues.

The protein belongs to the universal ribosomal protein uS12 family. Part of the 30S ribosomal subunit. Contacts proteins S8 and S17. May interact with IF1 in the 30S initiation complex.

Its function is as follows. With S4 and S5 plays an important role in translational accuracy. Interacts with and stabilizes bases of the 16S rRNA that are involved in tRNA selection in the A site and with the mRNA backbone. Located at the interface of the 30S and 50S subunits, it traverses the body of the 30S subunit contacting proteins on the other side and probably holding the rRNA structure together. The combined cluster of proteins S8, S12 and S17 appears to hold together the shoulder and platform of the 30S subunit. The polypeptide is Small ribosomal subunit protein uS12 (Bifidobacterium longum (strain NCC 2705)).